The chain runs to 284 residues: Tropomyosin (284 aa).

A coiled-coil region spans residues 1–284 (MDAIKKKMLA…DQTFAELAGY (284 aa)). The segment covering 202-213 (NNTKSLEISEQE) has biased composition (polar residues). Residues 202-223 (NNTKSLEISEQEASQREDSYEE) form a disordered region. Residues 214-223 (ASQREDSYEE) show a composition bias toward basic and acidic residues.

This sequence belongs to the tropomyosin family. Homodimer.

Its function is as follows. Tropomyosin, in association with the troponin complex, plays a central role in the calcium dependent regulation of muscle contraction. This chain is Tropomyosin, found in Haliotis rufescens (California red abalone).